We begin with the raw amino-acid sequence, 347 residues long: Phosphate acyltransferase (347 aa).

It belongs to the PlsX family. As to quaternary structure, homodimer. Probably interacts with PlsY.

Its subcellular location is the cytoplasm. It catalyses the reaction a fatty acyl-[ACP] + phosphate = an acyl phosphate + holo-[ACP]. The protein operates within lipid metabolism; phospholipid metabolism. In terms of biological role, catalyzes the reversible formation of acyl-phosphate (acyl-PO(4)) from acyl-[acyl-carrier-protein] (acyl-ACP). This enzyme utilizes acyl-ACP as fatty acyl donor, but not acyl-CoA. The sequence is that of Phosphate acyltransferase from Lawsonia intracellularis (strain PHE/MN1-00).